Here is a 102-residue protein sequence, read N- to C-terminus: MYAIIATGGKQYKVSEGDIITIEKLGVEAGEKVTFDQVLVVGGDDLKVGDPTVAGATVEASVVKEGRAKKVIVYKYKRKTGYHKKNGHRQAFTQVKIEKING.

It belongs to the bacterial ribosomal protein bL21 family. Part of the 50S ribosomal subunit. Contacts protein L20.

This protein binds to 23S rRNA in the presence of protein L20. The protein is Large ribosomal subunit protein bL21 of Agathobacter rectalis (strain ATCC 33656 / DSM 3377 / JCM 17463 / KCTC 5835 / VPI 0990) (Eubacterium rectale).